Here is a 554-residue protein sequence, read N- to C-terminus: Nuclear division defective protein 1 (554 aa).

Disordered stretches follow at residues 1 to 31 (MDRD…NNAD) and 98 to 117 (IQQQ…ALGS). Residues 98 to 113 (IQQQQQQQQQQQQQQQ) are compositionally biased toward low complexity. Residue T319 is modified to Phosphothreonine; by CDC28. Disordered regions lie at residues 410–475 (PTPN…GKKP) and 493–554 (SSSS…FNSQ). The span at 411 to 427 (TPNCNSLHSTTTGTSAL) shows a compositional bias: polar residues. Residues 448–465 (SSSNTVSFKSKSGNNNSK) are compositionally biased toward low complexity. Over residues 466–475 (GRIKKNGKKP) the composition is skewed to basic residues. Positions 493–513 (SSSSLSSSLNASSSAGNSNSN) are enriched in low complexity. A compositionally biased stretch (basic residues) spans 515-524 (TKKRASKLKR). Low complexity predominate over residues 525–536 (SQSLLSDSGSKS). The segment covering 539 to 554 (RKSCNSKSNGNLFNSQ) has biased composition (polar residues).

In terms of assembly, forms an activator complex with FKH2. In terms of processing, phosphorylation of Thr-319 by CDC28 is required for the interaction with FKH2 and recruitment to promoters.

It localises to the cytoplasm. The protein resides in the nucleus. Transcription activator involved in G2/M transcription through its association with FKH2. The protein is Nuclear division defective protein 1 (NDD1) of Saccharomyces cerevisiae (strain ATCC 204508 / S288c) (Baker's yeast).